Reading from the N-terminus, the 180-residue chain is Small ribosomal subunit protein bS18 (180 aa).

2 disordered regions span residues methionine 1–valine 26 and tyrosine 53–serine 82.

Belongs to the bacterial ribosomal protein bS18 family. In terms of assembly, part of the 30S ribosomal subunit. Forms a tight heterodimer with protein bS6.

Functionally, binds as a heterodimer with protein bS6 to the central domain of the 16S rRNA, where it helps stabilize the platform of the 30S subunit. The sequence is that of Small ribosomal subunit protein bS18 from Karelsulcia muelleri (strain GWSS) (Sulcia muelleri).